We begin with the raw amino-acid sequence, 575 residues long: MSQDSKVKTTESTPPAPTKARKWLPVLDPSGDYYYWWLNTMVFPIMYNLIIVVCRACFPDLQHSYLVAWFVLDYTSDLLYLLDIGVRFHTGFLEQGILVVDKSMIASRYVRTWSFLLDLASLVPTDAAYVQLGPHIPTLRLNRFLRVPRLFEAFDRTETRTAYPNAFRIAKLMIYIFVVIHWNSCLYFALSRYLGFGRDAWVYPDPAQPGFERLRRQYLYSFYFSTLILTTVGDTPLPAREEEYLFMVGDFLLAVMGFATIMGSMSSVIYNMNTADAAFYPDHALVKKYMKLQHVNRRLERRVIDWYQHLQINKKMTNEVAILQHLPERLRAEVAVSVHLSTLSRVQIFQNCEASLLEELVLKLQPQTYSPGEYVCRKGDIGREMYIIREGQLAVVADDGVTQYAVLGAGLYFGEISIINIKGNMSGNRRTANIKSLGYSDLFCLSKEDLREVLSEYPQAQAVMEEKGREILLKMNKLDVNAEAAEIALQEATESRLKGLDQQLDDLQTKFARLLAELESSALKIAYRIERLEWQTREWPMPDDMGEADDEAEPGEGTSKDGEEKAGQEGPSGLE.

At 1–38 (MSQDSKVKTTESTPPAPTKARKWLPVLDPSGDYYYWWL) the chain is on the cytoplasmic side. A helical membrane pass occupies residues 39–60 (NTMVFPIMYNLIIVVCRACFPD). The Extracellular segment spans residues 61–70 (LQHSYLVAWF). A helical transmembrane segment spans residues 71–91 (VLDYTSDLLYLLDIGVRFHTG). At 92–116 (FLEQGILVVDKSMIASRYVRTWSFL) the chain is on the cytoplasmic side. A helical membrane pass occupies residues 117–135 (LDLASLVPTDAAYVQLGPH). The Extracellular portion of the chain corresponds to 136-140 (IPTLR). A helical membrane pass occupies residues 141–159 (LNRFLRVPRLFEAFDRTET). Residues 160–166 (RTAYPNA) are Cytoplasmic-facing. Residues 164–272 (PNAFRIAKLM…GSMSSVIYNM (109 aa)) form an ion conduction pathway region. The chain crosses the membrane as a helical span at residues 167 to 190 (FRIAKLMIYIFVVIHWNSCLYFAL). Over 191–213 (SRYLGFGRDAWVYPDPAQPGFER) the chain is Extracellular. 2 helical membrane passes run 214–248 (LRRQ…LFMV) and 249–273 (GDFL…YNMN). The interval 231–234 (TVGD) is selectivity filter. Positions 274–350 (TADAAFYPDH…STLSRVQIFQ (77 aa)) are C-linker. Topologically, residues 274–575 (TADAAFYPDH…AGQEGPSGLE (302 aa)) are cytoplasmic. The IQ-type signature appears at 292-302 (LQHVNRRLERR). 348 to 471 (IFQNCEASLL…AVMEEKGREI (124 aa)) is a binding site for a nucleoside 3',5'-cyclic phosphate. Positions 354–474 (ASLLEELVLK…EEKGREILLK (121 aa)) are cyclic nucleotide-binding domain. 3',5'-cyclic GMP-binding residues include Gly-414, Ser-417, Arg-430, and Thr-431. 3',5'-cyclic AMP contacts are provided by Arg-430 and Thr-431. Residues 493-547 (TESRLKGLDQQLDDLQTKFARLLAELESSALKIAYRIERLEWQTREWPMPDDMGE) are a coiled coil. Residues 536–575 (TREWPMPDDMGEADDEAEPGEGTSKDGEEKAGQEGPSGLE) are disordered. Over residues 544-554 (DMGEADDEAEP) the composition is skewed to acidic residues. The segment covering 558-567 (TSKDGEEKAG) has biased composition (basic and acidic residues).

Belongs to the cyclic nucleotide-gated cation channel (TC 1.A.1.5) family. CNGA4 subfamily. As to quaternary structure, the olfactory cyclic nucleotide-gated channel is an heterotetramer composed of CNGA2, CNGA4 and CNGB1b subunits with 2:1:1 stoichiometry. Expressed in the olfactory epithelium.

The protein localises to the cell projection. The protein resides in the cilium membrane. It catalyses the reaction Ca(2+)(in) = Ca(2+)(out). The enzyme catalyses Na(+)(in) = Na(+)(out). It carries out the reaction K(+)(in) = K(+)(out). The catalysed reaction is NH4(+)(in) = NH4(+)(out). It catalyses the reaction Rb(+)(in) = Rb(+)(out). The enzyme catalyses Li(+)(in) = Li(+)(out). It carries out the reaction Cs(+)(in) = Cs(+)(out). Ca(2+)-calmodulin exerts its inhibitory effect in cAMP sensitivity by binding to IQ-like motif of CNGA4 and preferably binds to the channel in the closed state. Inhibition by PIP3 of the CNG channel probably occurs via CGNA2 binding. Its function is as follows. Pore-forming subunit of the olfactory cyclic nucleotide-gated channel. Operates in the cilia of olfactory sensory neurons where chemical stimulation of the odorant is converted to an electrical signal. Mediates odorant-induced cAMP-dependent Ca(2+) influx triggering neuron depolarization. The rise of intracellular Ca(2+) levels potentiates the olfactory response by activating Ca(2+)-dependent Cl(-) channels, but it also serves as a negative feedback signal to desensitize the channel for rapid adaptation to odorants. Conducts cGMP- and cAMP-gated ion currents, with permeability for monovalent and divalent cations. Conducts cAMP- and cGMP-gated ion currents, with permeability for monovalent and divalent cations. May conduct nitric oxide-gated Ca(2+) currents relevant to neurons of vomeronasal organ, a system involved in the perception of pheromones. The protein is Cyclic nucleotide-gated channel alpha-4 of Mus musculus (Mouse).